Here is a 306-residue protein sequence, read N- to C-terminus: Oxygen-dependent coproporphyrinogen-III oxidase (306 aa).

Position 94 (Ser-94) interacts with substrate. Residues His-98 and His-108 each coordinate a divalent metal cation. His-108 (proton donor) is an active-site residue. Asn-110 to Arg-112 serves as a coordination point for substrate. Residues His-147 and His-177 each contribute to the a divalent metal cation site. The important for dimerization stretch occupies residues Tyr-242–Glu-277. Gly-260–Arg-262 serves as a coordination point for substrate.

It belongs to the aerobic coproporphyrinogen-III oxidase family. In terms of assembly, homodimer. A divalent metal cation is required as a cofactor.

The protein localises to the cytoplasm. It catalyses the reaction coproporphyrinogen III + O2 + 2 H(+) = protoporphyrinogen IX + 2 CO2 + 2 H2O. The protein operates within porphyrin-containing compound metabolism; protoporphyrin-IX biosynthesis; protoporphyrinogen-IX from coproporphyrinogen-III (O2 route): step 1/1. Involved in the heme biosynthesis. Catalyzes the aerobic oxidative decarboxylation of propionate groups of rings A and B of coproporphyrinogen-III to yield the vinyl groups in protoporphyrinogen-IX. The protein is Oxygen-dependent coproporphyrinogen-III oxidase of Shewanella woodyi (strain ATCC 51908 / MS32).